A 173-amino-acid chain; its full sequence is Lens fiber membrane intrinsic protein (173 aa).

The Cytoplasmic portion of the chain corresponds to 1–3 (MYS). A helical membrane pass occupies residues 4 to 24 (FMGGGLFCAWVGTILLVVATA). Residues 25–66 (TDHWMQYRLSGSFAHQGLWRYCLGNKCFLQTESIAYWNATRA) are Extracellular-facing. Trp-43 and Trp-61 each carry a C-linked (Man) tryptophan glycan. An N-linked (GlcNAc...) asparagine glycan is attached at Asn-62. The helical transmembrane segment at 67-87 (FMILSALCATSGIIMGVLAFA) threads the bilayer. Topologically, residues 88 to 98 (QQSTFTRLSRP) are cytoplasmic. Residues 99–119 (FSAGIMFFASTLFVLLALAIY) form a helical membrane-spanning segment. The Extracellular portion of the chain corresponds to 120–140 (TGVTVSFLGRRFGDWRFSWSY). The helical transmembrane segment at 141 to 161 (ILGWVALLMTFFAGIFYMCAY) threads the bilayer. The Cytoplasmic portion of the chain corresponds to 162 to 173 (RMHECRRLATPR). Thr-171 carries the phosphothreonine modification.

Belongs to the PMP-22/EMP/MP20 family. In terms of assembly, seems to be associated with itself or another lens membrane component via disulfide bonds.

It localises to the membrane. In terms of biological role, present in the thicker 16-17 nm junctions of mammalian lens fiber cells, where it may contribute to cell junctional organization. Acts as a receptor for calmodulin. May play an important role in both lens development and cataractogenesis. The chain is Lens fiber membrane intrinsic protein (Lim2) from Mus musculus (Mouse).